The primary structure comprises 202 residues: Small ribosomal subunit protein uS4 (202 aa).

Residues 94 to 157 (SRLDSLVYRA…LEIPLIKNTL (64 aa)) enclose the S4 RNA-binding domain.

The protein belongs to the universal ribosomal protein uS4 family. Part of the 30S ribosomal subunit. Contacts protein S5. The interaction surface between S4 and S5 is involved in control of translational fidelity.

In terms of biological role, one of the primary rRNA binding proteins, it binds directly to 16S rRNA where it nucleates assembly of the body of the 30S subunit. With S5 and S12 plays an important role in translational accuracy. This is Small ribosomal subunit protein uS4 from Ureaplasma parvum serovar 3 (strain ATCC 27815 / 27 / NCTC 11736).